The primary structure comprises 242 residues: tRNA (guanine-N(1)-)-methyltransferase (242 aa).

Residues glycine 113 and 133–138 (IGDYVL) each bind S-adenosyl-L-methionine.

Belongs to the RNA methyltransferase TrmD family. As to quaternary structure, homodimer.

Its subcellular location is the cytoplasm. The catalysed reaction is guanosine(37) in tRNA + S-adenosyl-L-methionine = N(1)-methylguanosine(37) in tRNA + S-adenosyl-L-homocysteine + H(+). Its function is as follows. Specifically methylates guanosine-37 in various tRNAs. The polypeptide is tRNA (guanine-N(1)-)-methyltransferase (Shewanella sediminis (strain HAW-EB3)).